The primary structure comprises 477 residues: M-phase inducer phosphatase 3 (477 aa).

The segment at 1–20 is disordered; it reads MSAEFFSSKREEGSLASGPS. S2 bears the N-acetylserine mark. S20 and S38 each carry phosphoserine. T48 is subject to Phosphothreonine; by CDK1. Residues S58, S62, and S65 each carry the phosphoserine modification. T68 carries the post-translational modification Phosphothreonine; by CDK1. S123 carries the phosphoserine; by CDK1 modification. The residue at position 130 (S130) is a Phosphoserine. T131 carries the phosphothreonine modification. Position 169 is a phosphoserine; by CDK1 (S169). Phosphoserine; by PLK3 is present on residues S192 and S199. A Phosphoserine; by CDK1 modification is found at S218. S220 is subject to Phosphoserine; by CHEK1, CHEK2, BRSK1, MAPK14 AND MARK3. The Rhodanese domain maps to 325 to 432; it reads LIEKFYIIDC…FFPEYMELCE (108 aa). Residue C381 is part of the active site. Residue S476 is modified to Phosphoserine.

This sequence belongs to the MPI phosphatase family. As to quaternary structure, interacts with MAPK14 and 14-3-3 proteins. When phosphorylated on Ser-130 and/or Thr-131, interacts with PLK1. Interacts with MARK3/C-TAK1. Phosphorylated by CHEK1 and MAPK14 at Ser-220. This phosphorylation creates a binding site for 14-3-3 protein and inhibits the phosphatase. Phosphorylated by PLK4. Phosphorylated by PLK1, leading to activate the phosphatase activity. Phosphorylation by PLK3 at Ser-192 promotes nuclear translocation. Ser-199 is a minor phosphorylation site. Phosphorylation by CDK1 occurs at G2 and G2-M transition and leads to increased activity.

The protein resides in the nucleus. The enzyme catalyses O-phospho-L-tyrosyl-[protein] + H2O = L-tyrosyl-[protein] + phosphate. In terms of biological role, functions as a dosage-dependent inducer in mitotic control. Tyrosine protein phosphatase required for progression of the cell cycle. When phosphorylated, highly effective in activating G2 cells into prophase. Directly dephosphorylates CDK1 and activates its kinase activity. The sequence is that of M-phase inducer phosphatase 3 (CDC25C) from Bos taurus (Bovine).